Reading from the N-terminus, the 389-residue chain is Putative nickel insertion protein (389 aa).

Belongs to the LarC family.

This is Putative nickel insertion protein from Desulfotalea psychrophila (strain LSv54 / DSM 12343).